We begin with the raw amino-acid sequence, 314 residues long: MSTVGSTVSSTPSRRFKHRNVNTFLTYSRCPLEPEAVGLHIWSLIAHWTPVYVLSVRETHEDGGYHIHVLAQSAKPVYTTDSGFFDIDGFHPNIQSAKSANKVRAYAMKNPVTYWERGTFIPRKTSFLGDSTEPNSKKQSKDDIVRDIIEHSTNKQEYLSMIQKALPYEWATKLQYFEYSANKLFPDIQEIYTSPFPQSTPALLDPTAINTWLENNLYQVSPSAYMLANPSCLTLEEATSDLIWMHETSRTLIPTGSSACTSSGQQEQASPPGPGAWEDIITGRTTSTGPPTTRTQNTTSSTTYPSSTVHAGSN.

A CRESS-DNA virus Rep endonuclease domain is found at 17-120 (KHRNVNTFLT…PVTYWERGTF (104 aa)). The short motif at 24 to 27 (FLTY) is the RCR-1 element. Positions 58, 66, and 68 each coordinate a divalent metal cation. The RCR-2 signature appears at 66–68 (HIH). Tyr-106 acts as the For DNA cleavage activity in catalysis. Positions 106 to 109 (YAMK) match the RCR-3 motif. Asn-110 is a binding site for a divalent metal cation. Residues 180-192 (SANKLFPDIQEIY) are oligomerization. Residues 255-269 (TGSSACTSSGQQEQA) show a composition bias toward polar residues. The tract at residues 255 to 314 (TGSSACTSSGQQEQASPPGPGAWEDIITGRTTSTGPPTTRTQNTTSSTTYPSSTVHAGSN) is disordered. A compositionally biased stretch (low complexity) spans 282 to 308 (TGRTTSTGPPTTRTQNTTSSTTYPSST).

It belongs to the geminiviridae Rep protein family. In terms of assembly, homooligomer. Part of the C- and V-complexes which are RepA-Rep-DNA complexes involved in the c-sense and v-sense transcription. The cofactor is Mg(2+). Mn(2+) is required as a cofactor.

The protein resides in the host nucleus. Its subcellular location is the host cytoplasm. Implicated in enhancement of V-sense gene expression. Acts a an inhibitor of C-sense gene transcription. The sequence is that of Replication-associated protein A from Cenchrus echinatus (Sugarcane).